The sequence spans 81 residues: ATP synthase subunit c (81 aa).

The next 2 helical transmembrane spans lie at 7–27 (AASV…PGIG) and 57–77 (LAFM…LLFA).

This sequence belongs to the ATPase C chain family. As to quaternary structure, F-type ATPases have 2 components, F(1) - the catalytic core - and F(0) - the membrane proton channel. F(1) has five subunits: alpha(3), beta(3), gamma(1), delta(1), epsilon(1). F(0) has four main subunits: a(1), b(1), b'(1) and c(10-14). The alpha and beta chains form an alternating ring which encloses part of the gamma chain. F(1) is attached to F(0) by a central stalk formed by the gamma and epsilon chains, while a peripheral stalk is formed by the delta, b and b' chains.

Its subcellular location is the cellular thylakoid membrane. Functionally, f(1)F(0) ATP synthase produces ATP from ADP in the presence of a proton or sodium gradient. F-type ATPases consist of two structural domains, F(1) containing the extramembraneous catalytic core and F(0) containing the membrane proton channel, linked together by a central stalk and a peripheral stalk. During catalysis, ATP synthesis in the catalytic domain of F(1) is coupled via a rotary mechanism of the central stalk subunits to proton translocation. Key component of the F(0) channel; it plays a direct role in translocation across the membrane. A homomeric c-ring of between 10-14 subunits forms the central stalk rotor element with the F(1) delta and epsilon subunits. In Synechococcus elongatus (strain ATCC 33912 / PCC 7942 / FACHB-805) (Anacystis nidulans R2), this protein is ATP synthase subunit c.